The sequence spans 88 residues: Small ribosomal subunit protein bS20 (88 aa).

The disordered stretch occupies residues 1–25 (MANSAQARKRARQATKARAHNASLR). Over residues 7 to 19 (ARKRARQATKARA) the composition is skewed to basic residues.

It belongs to the bacterial ribosomal protein bS20 family.

Functionally, binds directly to 16S ribosomal RNA. This Azoarcus sp. (strain BH72) protein is Small ribosomal subunit protein bS20.